A 767-amino-acid polypeptide reads, in one-letter code: Photosystem I P700 chlorophyll a apoprotein A1 (767 aa).

The disordered stretch occupies residues 1–22 (MTISPPESGEKNKKVLEDPVKA). Residues 8-22 (SGEKNKKVLEDPVKA) show a composition bias toward basic and acidic residues. The next 8 helical transmembrane spans lie at 76 to 99 (IFSA…FHGA), 162 to 185 (LMAL…YHYH), 201 to 225 (LNHH…HIGA), 309 to 327 (IAHH…GHLY), 368 to 391 (RHAQ…HHMY), 407 to 433 (LGLF…IAMV), 455 to 477 (ALIS…LYIH), and 558 to 576 (LMIH…LILL). 2 residues coordinate [4Fe-4S] cluster: Cys600 and Cys609. 2 helical membrane-spanning segments follow: residues 616-637 (HVFL…HFSW) and 681-703 (ISMY…MFLF). A divinylchlorophyll a'-binding site is contributed by His692. Divinyl chlorophyll a contacts are provided by Met700 and Tyr708. Trp709 is a binding site for phylloquinone. The helical transmembrane segment at 741–761 (AVGVAHFLLGGIATTWAFFHA) threads the bilayer.

The protein belongs to the PsaA/PsaB family. The PsaA/B heterodimer binds the P700 divinyl chlorophyll special pair and subsequent electron acceptors. PSI consists of a core antenna complex that captures photons, and an electron transfer chain that converts photonic excitation into a charge separation. The cyanobacterial PSI reaction center is composed of one copy each of PsaA,B,C,D,E,F,I,J,K,L,M and X, and forms trimeric complexes. It depends on PSI electron transfer chain: 5 divinyl chlorophyll a, 1 divinyl chlorophyll a', 2 phylloquinones and 3 4Fe-4S clusters. PSI core antenna: 90 divinyl chlorophyll a, 22 carotenoids, 3 phospholipids and 1 galactolipid. P700 is a divinyl chlorophyll a/divinyl chlorophyll a' dimer, A0 is one or more divinyl chlorophyll a, A1 is one or both phylloquinones and FX is a shared 4Fe-4S iron-sulfur center. as a cofactor.

The protein localises to the cellular thylakoid membrane. The catalysed reaction is reduced [plastocyanin] + hnu + oxidized [2Fe-2S]-[ferredoxin] = oxidized [plastocyanin] + reduced [2Fe-2S]-[ferredoxin]. In terms of biological role, psaA and PsaB bind P700, the primary electron donor of photosystem I (PSI), as well as the electron acceptors A0, A1 and FX. PSI is a plastocyanin/cytochrome c6-ferredoxin oxidoreductase, converting photonic excitation into a charge separation, which transfers an electron from the donor P700 chlorophyll pair to the spectroscopically characterized acceptors A0, A1, FX, FA and FB in turn. Oxidized P700 is reduced on the lumenal side of the thylakoid membrane by plastocyanin or cytochrome c6. The chain is Photosystem I P700 chlorophyll a apoprotein A1 from Prochlorococcus marinus (strain MIT 9312).